A 135-amino-acid polypeptide reads, in one-letter code: 30 kDa antigenic glycoprotein (135 aa).

Residues 1-5 form the signal peptide; that stretch reads GNTYS. 4 N-linked (GlcNAc...) asparagine glycosylation sites follow: Asn22, Asn31, Asn57, and Asn73.

To H.contortus 15 kDa excretory/secretory protein.

It localises to the secreted. In Trichostrongylus colubriformis (Black scour worm), this protein is 30 kDa antigenic glycoprotein.